A 247-amino-acid polypeptide reads, in one-letter code: Cell division protein ZapD (247 aa).

This sequence belongs to the ZapD family. Interacts with FtsZ.

It localises to the cytoplasm. Functionally, cell division factor that enhances FtsZ-ring assembly. Directly interacts with FtsZ and promotes bundling of FtsZ protofilaments, with a reduction in FtsZ GTPase activity. This is Cell division protein ZapD from Escherichia coli O7:K1 (strain IAI39 / ExPEC).